Here is a 226-residue protein sequence, read N- to C-terminus: Ras-related protein RGP1 (226 aa).

25-32 serves as a coordination point for GTP; that stretch reads GDSAVGKS. The Effector region motif lies at 47-55; it reads SKATIGVEF. GTP is bound by residues 73–77 and 131–134; these read DTAGQ and NKSD. Residues Cys-223 and Cys-224 are each lipidated (S-geranylgeranyl cysteine).

This sequence belongs to the small GTPase superfamily. Rab family.

The protein resides in the cell membrane. In terms of biological role, may play an important role in plant growth and development. In Oryza sativa subsp. japonica (Rice), this protein is Ras-related protein RGP1 (RGP1).